A 348-amino-acid polypeptide reads, in one-letter code: Dihydroorotase (348 aa).

2 residues coordinate Zn(2+): His17 and His19. Substrate is bound by residues 19-21 (HLR) and Asn45. Lys103, His140, and His178 together coordinate Zn(2+). Residue Lys103 is modified to N6-carboxylysine. His140 lines the substrate pocket. Position 223 (Leu223) interacts with substrate. Asp251 contacts Zn(2+). Residue Asp251 is part of the active site. Substrate contacts are provided by His255 and Ala267.

This sequence belongs to the metallo-dependent hydrolases superfamily. DHOase family. Class II DHOase subfamily. In terms of assembly, homodimer. Requires Zn(2+) as cofactor.

It carries out the reaction (S)-dihydroorotate + H2O = N-carbamoyl-L-aspartate + H(+). The protein operates within pyrimidine metabolism; UMP biosynthesis via de novo pathway; (S)-dihydroorotate from bicarbonate: step 3/3. Functionally, catalyzes the reversible cyclization of carbamoyl aspartate to dihydroorotate. This Escherichia coli (strain SMS-3-5 / SECEC) protein is Dihydroorotase.